Here is a 349-residue protein sequence, read N- to C-terminus: MGFSSSLSCSAMGALIVGCLLLQASNSNAQLRPDFYFRTCPPIFNIIGDTIVNELRTDPRIAASLLRLHFHDCFVRGCDASILLDNSTSFRTEKDAAPNKNSVRGFDVIDRMKAAIERACPRTVSCADIITIASQISVLLSGGPWWPVPLGRRDSVEAFFALANTALPSPFSTLTQLKTAFADVGLNRPSDLVALSGGHTFGKAQCQFVTPRLYNFNGTNRPDPSLNPTYLVELRRLCPQNGNGTVLVNFDSVTPTTFDRQYYTNLLNGKGLIQSDQVLFSTPGADTIPLVNQYSSNTFVFFGAFVDAMIRMGNLKPLTGTQGEIRQNCRVVNPRIRVVENDDGVVSSI.

A signal peptide spans 1-29; sequence MGFSSSLSCSAMGALIVGCLLLQASNSNA. Position 30 is a pyrrolidone carboxylic acid (Gln30). Disulfide bonds link Cys40-Cys120, Cys73-Cys78, Cys126-Cys329, and Cys206-Cys238. His71 functions as the Proton acceptor in the catalytic mechanism. Ca(2+) is bound by residues Asp72, Val75, Gly77, Asp79, and Ser81. Asn86 is a glycosylation site (N-linked (GlcNAc...) asparagine). A substrate-binding site is contributed by Pro168. Position 199 (His199) interacts with heme b. Residue Thr200 coordinates Ca(2+). Residues Asn217 and Asn243 are each glycosylated (N-linked (GlcNAc...) asparagine). Positions 251, 254, and 259 each coordinate Ca(2+).

Belongs to the peroxidase family. Classical plant (class III) peroxidase subfamily. The cofactor is heme b. Ca(2+) is required as a cofactor.

It localises to the secreted. Its subcellular location is the vacuole. The catalysed reaction is 2 a phenolic donor + H2O2 = 2 a phenolic radical donor + 2 H2O. In terms of biological role, removal of H(2)O(2), oxidation of toxic reductants, biosynthesis and degradation of lignin, suberization, auxin catabolism, response to environmental stresses such as wounding, pathogen attack and oxidative stress. These functions might be dependent on each isozyme/isoform in each plant tissue. The sequence is that of Peroxidase 23 (PER23) from Arabidopsis thaliana (Mouse-ear cress).